A 423-amino-acid chain; its full sequence is MTLIAFGINHKTAPVELREKVAFSPDAMVEALKSLAHLTGADESVIVSTCNRTEIYAQAENLTADALTTWLAEFHQAKADELGLNSYIYHQEDAIKHIMRVACGLDSLILGEPQILGQVKQAFVSAKDSGVIKSDFERLFQQTFSVAKRVRSETEIGSNAVSVAYASVQLAKHIFSSLKKSNVLLIGAGETIELVAKHMHEQGVKKLSVANRTLARAEAIAQPLGATTLTLTQIPAHLKDADIVISSTASQLPILGKGLVERALKDRRHKPMFLVDLAVPRDIEAEVGELDDAYLYTVDDLQQIVEKNIESRQHAALQAQQMIEEQAQQYMLWRQGQSSIDVLRDFRQQSESQRDTLIAKALNQLADGKEAEQVIKELANKLTNSLIHAPTKALKKAAMQQDNKNMSLLQDALGLARANDSSK.

Residues 49 to 52 (TCNR), S107, 112 to 114 (EPQ), and Q118 contribute to the substrate site. Catalysis depends on C50, which acts as the Nucleophile. 187-192 (GAGETI) is an NADP(+) binding site.

It belongs to the glutamyl-tRNA reductase family. Homodimer.

It carries out the reaction (S)-4-amino-5-oxopentanoate + tRNA(Glu) + NADP(+) = L-glutamyl-tRNA(Glu) + NADPH + H(+). It functions in the pathway porphyrin-containing compound metabolism; protoporphyrin-IX biosynthesis; 5-aminolevulinate from L-glutamyl-tRNA(Glu): step 1/2. In terms of biological role, catalyzes the NADPH-dependent reduction of glutamyl-tRNA(Glu) to glutamate 1-semialdehyde (GSA). The polypeptide is Glutamyl-tRNA reductase (Pseudoalteromonas atlantica (strain T6c / ATCC BAA-1087)).